The primary structure comprises 522 residues: 2-isopropylmalate synthase (522 aa).

The 263-residue stretch at 5 to 267 (VIIFDTTLRD…ETGINAKEIH (263 aa)) folds into the Pyruvate carboxyltransferase domain. Residues Asp14, His202, His204, and Asn238 each contribute to the Mn(2+) site. Residues 392–522 (QLQQLVVQSD…MHKNRELGGV (131 aa)) are regulatory domain.

It belongs to the alpha-IPM synthase/homocitrate synthase family. LeuA type 1 subfamily. In terms of assembly, homodimer. Mn(2+) serves as cofactor.

The protein localises to the cytoplasm. It carries out the reaction 3-methyl-2-oxobutanoate + acetyl-CoA + H2O = (2S)-2-isopropylmalate + CoA + H(+). It functions in the pathway amino-acid biosynthesis; L-leucine biosynthesis; L-leucine from 3-methyl-2-oxobutanoate: step 1/4. Catalyzes the condensation of the acetyl group of acetyl-CoA with 3-methyl-2-oxobutanoate (2-ketoisovalerate) to form 3-carboxy-3-hydroxy-4-methylpentanoate (2-isopropylmalate). In Shewanella sp. (strain MR-7), this protein is 2-isopropylmalate synthase.